We begin with the raw amino-acid sequence, 89 residues long: Small ribosomal subunit protein uS17 (89 aa).

The protein belongs to the universal ribosomal protein uS17 family. Part of the 30S ribosomal subunit.

Functionally, one of the primary rRNA binding proteins, it binds specifically to the 5'-end of 16S ribosomal RNA. In Leptospira interrogans serogroup Icterohaemorrhagiae serovar Lai (strain 56601), this protein is Small ribosomal subunit protein uS17.